We begin with the raw amino-acid sequence, 126 residues long: Glycerol dehydrogenase small subunit (126 aa).

4 helical membrane-spanning segments follow: residues 13–33 (WLTL…VIGG), 41–61 (GSTY…FMLM), 67–87 (AFLY…EVGF), and 92–112 (LLPR…TIPV).

It localises to the cell membrane. The catalysed reaction is glycerol + A = dihydroxyacetone + AH2. Functionally, catalyzes the oxidation of glycerol to glycerone. Also acts, more slowly, on a number of other polyols including D-sorbitol, D-arabinitol, D-mannitol, meso-erythritol, adonitol and propylene glycol. In Gluconobacter thailandicus, this protein is Glycerol dehydrogenase small subunit (sldB).